Reading from the N-terminus, the 209-residue chain is Large ribosomal subunit protein uL4 (209 aa).

Positions 46 to 72 (GTSSTKTRSEVRGSSKKPWKQKGTGRA) are disordered. The span at 59–72 (SSKKPWKQKGTGRA) shows a compositional bias: basic residues.

Belongs to the universal ribosomal protein uL4 family. In terms of assembly, part of the 50S ribosomal subunit.

Its function is as follows. One of the primary rRNA binding proteins, this protein initially binds near the 5'-end of the 23S rRNA. It is important during the early stages of 50S assembly. It makes multiple contacts with different domains of the 23S rRNA in the assembled 50S subunit and ribosome. In terms of biological role, forms part of the polypeptide exit tunnel. The chain is Large ribosomal subunit protein uL4 from Borreliella burgdorferi (strain ATCC 35210 / DSM 4680 / CIP 102532 / B31) (Borrelia burgdorferi).